The chain runs to 257 residues: 1-(5-phosphoribosyl)-5-[(5-phosphoribosylamino)methylideneamino] imidazole-4-carboxamide isomerase (257 aa).

D8 serves as the catalytic Proton acceptor. The active-site Proton donor is the D129.

The protein belongs to the HisA/HisF family.

It localises to the cytoplasm. It catalyses the reaction 1-(5-phospho-beta-D-ribosyl)-5-[(5-phospho-beta-D-ribosylamino)methylideneamino]imidazole-4-carboxamide = 5-[(5-phospho-1-deoxy-D-ribulos-1-ylimino)methylamino]-1-(5-phospho-beta-D-ribosyl)imidazole-4-carboxamide. It functions in the pathway amino-acid biosynthesis; L-histidine biosynthesis; L-histidine from 5-phospho-alpha-D-ribose 1-diphosphate: step 4/9. The sequence is that of 1-(5-phosphoribosyl)-5-[(5-phosphoribosylamino)methylideneamino] imidazole-4-carboxamide isomerase from Thermosynechococcus vestitus (strain NIES-2133 / IAM M-273 / BP-1).